Here is a 667-residue protein sequence, read N- to C-terminus: MIENEEFKNLNDHWRNTIEKLSIYKDISEQTLERCDESFIETKKKICQDFDTIINYLTDRKIELLQQLGEELEAHKQQIESNRDKSMMLIEQLNKKMNSPSKFDININSSGGGGSGGVVFSGGGGGGLSHSTSYSGNLSNYLSASSGFASSPLNYSTSSLMVTNNNNNNPMTSPLKKSTSFQTDYLQVLKESISYIEWDWKDEFQENNTTNRKIIKQPKPISSMASDLILNSSFKSFDDLNKKFQEFSNNNDDTDDYDNNNNNNNDNKDDFDNCENNNNGDSLKMKSNKKLKIFGKLKFKIIETLEYKRLNSNLEDTKCIYSIGGKCKDGFDQYSIEKFDFKQGLWRSLQSIPSIMDNDFTGNFDGKNHIYLFGGSLQPTRILKYNLLEDQWEIIETNNNNNNNNNGANGANGNIEIPDNGRFLHCSVFDGKQNIYLIGGFPRSTSILKFNIITEQFSKQQSKSTTSSRNLWSMGAIYKEDNNSIYLIGGCNITRQSVDTLERYDIDNDSFTTLSPLPVSCYGAGVFYDDQEHYIYVLGGYNSKENKCLSIIQRYDLLDNSWSVLTNNHDDDDDDDGDSGGGLQNLLLPKPMMINGNSIIFDSSKRIVHILGGYNNVTKESIDDIYTLDISNILDENLSNKINWEVNKIPQFKNSKFKGGTSILVQK.

A coiled-coil region spans residues 58-98 (TDRKIELLQQLGEELEAHKQQIESNRDKSMMLIEQLNKKMN). The disordered stretch occupies residues 248 to 281 (SNNNDDTDDYDNNNNNNNDNKDDFDNCENNNNGD). Kelch repeat units lie at residues 319–366 (CIYS…NFDG), 369–412 (HIYL…NGAN), 434–480 (NIYL…IYKE), 484–531 (SIYL…YDDQ), 534–582 (YIYV…SGGG), and 607–654 (IVHI…QFKN).

This is Kelch repeat-containing protein DDB_G0274267 from Dictyostelium discoideum (Social amoeba).